A 326-amino-acid polypeptide reads, in one-letter code: Photosystem II assembly factor Ycf39 (326 aa).

Belongs to the NmrA-type oxidoreductase family. Ycf39 subfamily. In terms of assembly, purified in several chlorophyll- and carotenoid-containing complexes, including photosystem II (PSII) assembly intermediate complex RCII* (iD1, D1, D2, PsbE, PsbF, PsbI, Ycf39, Ycf48, HliC and HliD) and the Ycf39-Hlip complex (Ycf39, HliC, HliD and pigments). Tagged protein does not pull down mature PSII.

The protein resides in the cellular thylakoid membrane. Requires HliD to bind pigments. The Ycf39-Hlip complex binds D1 at an early stage of PSII assembly along with Ycf48, ribosomes and ChlG, the last enzyme in chlorophyll biosynthesis; it may be involved in chlorophyll reuse and delivery to D1 in the initial stages of PSII assembly. The Ycf39-Hlip complex efficiently quenches chlorophyll fluorescence, contributing to photoprotection. The chain is Photosystem II assembly factor Ycf39 from Synechocystis sp. (strain ATCC 27184 / PCC 6803 / Kazusa).